Here is a 190-residue protein sequence, read N- to C-terminus: Peptidyl-tRNA hydrolase (190 aa).

Residue Tyr-14 coordinates tRNA. The active-site Proton acceptor is His-19. TRNA contacts are provided by Tyr-64, Asn-66, and Asn-112.

It belongs to the PTH family. As to quaternary structure, monomer.

Its subcellular location is the cytoplasm. It catalyses the reaction an N-acyl-L-alpha-aminoacyl-tRNA + H2O = an N-acyl-L-amino acid + a tRNA + H(+). Its function is as follows. Hydrolyzes ribosome-free peptidyl-tRNAs (with 1 or more amino acids incorporated), which drop off the ribosome during protein synthesis, or as a result of ribosome stalling. Functionally, catalyzes the release of premature peptidyl moieties from peptidyl-tRNA molecules trapped in stalled 50S ribosomal subunits, and thus maintains levels of free tRNAs and 50S ribosomes. This Chlorobium luteolum (strain DSM 273 / BCRC 81028 / 2530) (Pelodictyon luteolum) protein is Peptidyl-tRNA hydrolase.